The sequence spans 455 residues: uncharacterized protein (455 aa).

12 helical membrane passes run 19–39, 63–83, 106–126, 140–160, 173–195, 200–222, 265–285, 288–308, 324–344, 348–368, 388–408, and 410–430; these read FSLFSLTWPIFIEVSLYMFMG, ILNLIIVMFSFIATGTTVIIS, FFISLAISAVVFFAAVPLLHM, FLQVVGGLSFIQALIMTFSAI, VTIGMNILNIAGNFVVIFGLFGF, VAGVAMSTSIARVIGLIAMIVIV, MIVTYFIAIMGAQALTTKVYT, ITMFILLFGTAISQGTQILIG, MKSLYWALGIAAATSVLMTIF, LIGLFTQSPDIIATASLLIAM, AAGDAKFPVYMAMISMWGIGL, and LAYLFGIHLGFGLAGIWISFI.

Belongs to the multi antimicrobial extrusion (MATE) (TC 2.A.66.1) family.

The protein resides in the cell membrane. This is an uncharacterized protein from Bacillus subtilis (strain 168).